Consider the following 274-residue polypeptide: MAAGSSHVSADARKLVGKVAVITGGASGIGACTARLFVKHGARVVVADIQDELGASLVAELGPDASSYVHCDVTNEGDVAAAVDHAVARFGKLDVMFNNAGVSGPPCFRMSECTKEDFERVLAVNLVGPFLGTKHAARVMAPARRGSIISTASLSSSVSGAASHAYTTSKHALVGFTENAAGELGRHGIRVNCVSPAGVATPLARAAMGMDDEAIEAIMANSANLKGAGALKADDIAAAALFLASDDGRYVSGQNLRVDGGLSVVNSSFGFFRD.

Belongs to the short-chain dehydrogenases/reductases (SDR) family.

It carries out the reaction 3beta-hydroxy-9beta-pimara-7,15-dien-19,6beta-olide + NAD(+) = momilactone A + NADH + H(+). It catalyses the reaction 3beta-hydroxy-9beta-pimara-7,15-dien-19,6beta-olide + NADP(+) = momilactone A + NADPH + H(+). Involved in momilactone phytoalexins biosynthesis. Catalyzes the last step of momilactone A biosynthesis. The chain is Momilactone A synthase from Oryza sativa subsp. japonica (Rice).